Here is a 233-residue protein sequence, read N- to C-terminus: Small ribosomal subunit protein uS2 (233 aa).

The protein belongs to the universal ribosomal protein uS2 family.

The chain is Small ribosomal subunit protein uS2 from Bacillus cereus (strain G9842).